The chain runs to 1020 residues: FERM domain-containing protein 4A (1020 aa).

Positions 5-307 constitute an FERM domain; it reads RRCQVHLLDD…SQHQFYLDRK (303 aa). Residues 343 to 405 form a necessary for interaction with CYTH1 region; sequence KGKIISGSSG…RLCLREAELT (63 aa). Over residues 351-367 the composition is skewed to low complexity; sequence SGSLLSSGSQESDSSQS. Positions 351 to 371 are disordered; it reads SGSLLSSGSQESDSSQSAKKD. The stretch at 367 to 401 forms a coiled coil; sequence SAKKDMLAALKSRQEALEETLRQRLEELKRLCLRE. The residue at position 515 (Ser515) is a Phosphoserine. The segment at 538–665 is disordered; that stretch reads DEDSQVTSTI…MPSTPDLRVR (128 aa). The segment covering 542–551 has biased composition (polar residues); sequence QVTSTISPLQ. A compositionally biased stretch (pro residues) spans 556 to 572; the sequence is GLPPRPPSSHNRPPPPQ. A necessary for tight junction and adherens junction localization; Requires for interaction with PARD3 region spans residues 565–920; sequence HNRPPPPQSL…QWYQRSTASH (356 aa). A phosphoserine mark is found at Ser590 and Ser601. Residues 609–624 are compositionally biased toward basic residues; the sequence is VKKRSSHGHSSSHKRF. Over residues 626-658 the composition is skewed to polar residues; the sequence is STGSCTEAGVSSSLQNSPIRSLPHWNSQSSMPS. Ser666 and Ser696 each carry phosphoserine. Disordered regions lie at residues 698–741 and 757–810; these read ESQG…HSSS and AEDS…QSQP. Residues 773–796 are compositionally biased toward low complexity; it reads RAAGALGSASSGSMPNLAARSGAA. Phosphoserine is present on residues Ser785, Ser854, and Ser882. Disordered stretches follow at residues 862-949 and 961-1020; these read KESW…STFV and CKAT…STDE. A compositionally biased stretch (basic and acidic residues) spans 893-910; the sequence is DGAHDKGSGRAAVSDELR. Low complexity predominate over residues 927-947; the sequence is SHTSSTSSDSGSQYSTSSQST. Composition is skewed to polar residues over residues 967–981, 994–1004, and 1011–1020; these read ALPQSQRSSTPSSEI, TWQTGEATENS, and ESPTHQSTDE.

As to quaternary structure, interacts (via coiled-coil domain) with CYTH1 (via coiled-coil domain). Interacts with PARD3 (via coiled-coil domain). Found in a complex with PARD3, CYTH1 and FRMD4A. Interacts with CYTH2. Interacts with CYTH3.

The protein localises to the cytoplasm. Its subcellular location is the cytoskeleton. It localises to the cell junction. The protein resides in the adherens junction. It is found in the tight junction. In terms of biological role, scaffolding protein that regulates epithelial cell polarity by connecting ARF6 activation with the PAR3 complex. Plays a redundant role with FRMD4B in epithelial polarization. May regulate MAPT secretion by activating ARF6-signaling. This is FERM domain-containing protein 4A (Frmd4a) from Mus musculus (Mouse).